The primary structure comprises 190 residues: Photosynthetic NDH subunit of lumenal location 2, chloroplastic (190 aa).

The transit peptide at 1 to 31 (MSSFTTTNTPPPYLLRKIYHRRVNQPFSVVC) directs the protein to the chloroplast. Residues 32-68 (CTGEPQQDIFTRRRTLTSLITFTVIGGATSSALAQEK) constitute a thylakoid transit peptide. Coiled coils occupy residues 87–107 (EDAA…REML) and 139–159 (ESRR…MSEL).

This sequence belongs to the PsbQ family. As to quaternary structure, part of the chloroplast NDH complex, composed of a mixture of chloroplast and nucleus encoded subunits. Component of the NDH lumenal subcomplex, at least composed of PnsL1, PnsL2, PnsL3, PnsL4 and PnsL5.

The protein resides in the plastid. The protein localises to the chloroplast thylakoid membrane. In terms of biological role, NDH shuttles electrons from NAD(P)H:plastoquinone, via FMN and iron-sulfur (Fe-S) centers, to quinones in the photosynthetic chain and possibly in a chloroplast respiratory chain. The immediate electron acceptor for the enzyme in this species is believed to be plastoquinone. Couples the redox reaction to proton translocation, and thus conserves the redox energy in a proton gradient. Required for both formation and activity of the chloroplast NAD(P)H dehydrogenase (NDH) complex. This Arabidopsis thaliana (Mouse-ear cress) protein is Photosynthetic NDH subunit of lumenal location 2, chloroplastic.